Reading from the N-terminus, the 270-residue chain is Glutamate racemase (270 aa).

Substrate-binding positions include 7–8 (DS) and 39–40 (YG). Cys70 serves as the catalytic Proton donor/acceptor. 71–72 (NT) provides a ligand contact to substrate. The active-site Proton donor/acceptor is the Cys194. 195–196 (TH) contributes to the substrate binding site.

This sequence belongs to the aspartate/glutamate racemases family.

It catalyses the reaction L-glutamate = D-glutamate. It functions in the pathway cell wall biogenesis; peptidoglycan biosynthesis. Provides the (R)-glutamate required for cell wall biosynthesis. This Cereibacter sphaeroides (strain ATCC 17023 / DSM 158 / JCM 6121 / CCUG 31486 / LMG 2827 / NBRC 12203 / NCIMB 8253 / ATH 2.4.1.) (Rhodobacter sphaeroides) protein is Glutamate racemase.